The chain runs to 484 residues: Alginate production protein AlgE (484 aa).

The signal sequence occupies residues 1 to 25; that stretch reads MSRKQRISAGLGLGASLLCCNPLFA. Over residues 93 to 103 the composition is skewed to acidic residues; the sequence is TDPTDPNEEPG. A disordered region spans residues 93–118; sequence TDPTDPNEEPGGDPANGFSRDSSRDP.

It belongs to the AlgE family.

It localises to the cell outer membrane. It functions in the pathway glycan biosynthesis; alginate biosynthesis. Has non-porin-like, channel-forming properties and probably functions as an alginate permeability pore. In Azotobacter vinelandii, this protein is Alginate production protein AlgE (algE).